The chain runs to 228 residues: RING1 and YY1-binding protein (228 aa).

3 disordered regions span residues Met-1–Asp-21, Gln-65–Ala-156, and Asp-172–Phe-228. The RanBP2-type zinc-finger motif lies at Asp-21–Thr-50. Positions Pro-76–Ile-98 are enriched in basic and acidic residues. Lys-77 participates in a covalent cross-link: Glycyl lysine isopeptide (Lys-Gly) (interchain with G-Cter in SUMO2). Phosphoserine is present on Ser-99. Basic and acidic residues predominate over residues Pro-113–Pro-122. Phosphoserine occurs at positions 123, 127, and 130. The span at Glu-124–Thr-143 shows a compositional bias: polar residues. The tract at residues Thr-143–Glu-226 is interaction with GABPB1 and FANK1. The segment covering Ser-179–Glu-204 has biased composition (low complexity). Ser-227 carries the post-translational modification Phosphoserine.

As to quaternary structure, monomer. Component of repressive BCOR complex containing Polycomb group subcomplex at least composed of BCOR, PCGF1, RING1 and RNF2/RING2. Component of PCR1-like complexes. Interacts with PCGF1. Part of a PCR1-like complex that contains AUTS2, PCGF5, RNF2, CSNK2B and RYBP. Interacts with RNF2; the interaction is direct. Interacts with CBX2, YAF2, RING1 and RNF2. Interacts with ubiquitin and ubiquitinated proteins. Interacts with ubiquitinated histone H2A. Interacts with apoptin, DEDD, FADD, CASP8, CASP10, YY1 and GABPB1. Together with GABPB1 and YY1, it forms a ternary complex, probably being the bridge factor between these two transcription factors. Interacts with MDM2, and thereby inhibits ubiquitination of TP53. Identified in a ternary complex containing MDM2, TP53 and RYBP. Interacts with FANK1; may prevent the ubiquitin-mediated proteasomal degradation of FANK1. Interacts with IFT57. Post-translationally, monoubiquitinated. Down-regulated in breast cancer tissues and in several breast cancer cell lines (at protein level). Widely expressed with highest levels in lymphoid tissues and placenta.

The protein localises to the nucleus. It localises to the cytoplasm. It is found in the nucleoplasm. Its function is as follows. Component of a Polycomb group (PcG) multiprotein PRC1-like complex, a complex class required to maintain the transcriptionally repressive state of many genes, including Hox genes, throughout development. PcG PRC1-like complex acts via chromatin remodeling and modification of histones; it mediates monoubiquitination of histone H2A 'Lys-119', rendering chromatin heritably changed in its expressibility. Component of a PRC1-like complex that mediates monoubiquitination of histone H2A 'Lys-119' on the X chromosome and is required for normal silencing of one copy of the X chromosome in XX females. May stimulate ubiquitination of histone H2A 'Lys-119' by recruiting the complex to target sites. Inhibits ubiquitination and subsequent degradation of TP53, and thereby plays a role in regulating transcription of TP53 target genes. May also regulate the ubiquitin-mediated proteasomal degradation of other proteins like FANK1 to regulate apoptosis. May be implicated in the regulation of the transcription as a repressor of the transcriptional activity of E4TF1. May bind to DNA. May play a role in the repression of tumor growth and metastasis in breast cancer by down-regulating SRRM3. This Homo sapiens (Human) protein is RING1 and YY1-binding protein (RYBP).